A 767-amino-acid chain; its full sequence is Cilia- and flagella-associated protein 91 (767 aa).

The interval methionine 1–serine 29 is disordered. The segment covering glutamine 8–threonine 19 has biased composition (polar residues).

Belongs to the CFAP91 family. As to quaternary structure, part of a complex containing MYCBP, AKAP1 and PRKAR2B. Interacts with MYCBP and AKAP1. Interacts with CFAP61. Post-translationally, phosphorylated by PKA.

It is found in the cytoplasm. The protein resides in the mitochondrion. It localises to the cytoskeleton. Its subcellular location is the cilium axoneme. Involved in sperm flagellum axonemal organization and function. May regulate cilium motility through its role in the assembly of the axonemal radial spokes. This is Cilia- and flagella-associated protein 91 (CFAP91) from Macaca fascicularis (Crab-eating macaque).